The chain runs to 156 residues: Transcription elongation factor GreA (156 aa).

The stretch at 6–75 (IYLTKEGYEK…ELENMLSKAE (70 aa)) forms a coiled coil.

Belongs to the GreA/GreB family.

Its function is as follows. Necessary for efficient RNA polymerase transcription elongation past template-encoded arresting sites. The arresting sites in DNA have the property of trapping a certain fraction of elongating RNA polymerases that pass through, resulting in locked ternary complexes. Cleavage of the nascent transcript by cleavage factors such as GreA or GreB allows the resumption of elongation from the new 3'terminus. GreA releases sequences of 2 to 3 nucleotides. The sequence is that of Transcription elongation factor GreA from Thermosipho africanus (strain TCF52B).